A 541-amino-acid chain; its full sequence is Chaperonin GroEL 2 (541 aa).

Residues 29 to 32 (TLGP), 86 to 90 (DGTTT), glycine 413, 476 to 478 (NAA), and aspartate 492 contribute to the ATP site.

The protein belongs to the chaperonin (HSP60) family. Forms a cylinder of 14 subunits composed of two heptameric rings stacked back-to-back. Interacts with the co-chaperonin GroES.

The protein localises to the secreted. It is found in the capsule. Its subcellular location is the cell surface. It localises to the cell wall. It catalyses the reaction ATP + H2O + a folded polypeptide = ADP + phosphate + an unfolded polypeptide.. In terms of biological role, together with its co-chaperonin GroES, plays an essential role in assisting protein folding. The GroEL-GroES system forms a nano-cage that allows encapsulation of the non-native substrate proteins and provides a physical environment optimized to promote and accelerate protein folding. This chain is Chaperonin GroEL 2, found in Mycolicibacterium paratuberculosis (strain ATCC BAA-968 / K-10) (Mycobacterium paratuberculosis).